The primary structure comprises 157 residues: UPF0251 protein CLM_1546 (157 aa).

It belongs to the UPF0251 family.

The chain is UPF0251 protein CLM_1546 from Clostridium botulinum (strain Kyoto / Type A2).